We begin with the raw amino-acid sequence, 207 residues long: Large ribosomal subunit protein uL4 (207 aa).

Residues 43–80 (RRRSGTAKSKGRSEVSGSTRKLYRQKGTGNARSGSVKS) are disordered. Polar residues predominate over residues 69-78 (GTGNARSGSV).

It belongs to the universal ribosomal protein uL4 family. In terms of assembly, part of the 50S ribosomal subunit.

Functionally, one of the primary rRNA binding proteins, this protein initially binds near the 5'-end of the 23S rRNA. It is important during the early stages of 50S assembly. It makes multiple contacts with different domains of the 23S rRNA in the assembled 50S subunit and ribosome. In terms of biological role, forms part of the polypeptide exit tunnel. This Desulforapulum autotrophicum (strain ATCC 43914 / DSM 3382 / VKM B-1955 / HRM2) (Desulfobacterium autotrophicum) protein is Large ribosomal subunit protein uL4.